The chain runs to 203 residues: uncharacterized protein (203 aa).

Positions 1-23 (MKKIYKALISSLLLSTSINVAYA) are cleaved as a signal peptide. Residues 24 to 87 (ETQYVTENLS…ILNSDLSSTP (64 aa)) enclose the SH3b domain. Residues 167 to 189 (IAIQWFIYGGSVLGVGLLFGLLI) traverse the membrane as a helical segment.

It to E.coli YgiM.

It localises to the membrane. This is an uncharacterized protein from Haemophilus influenzae (strain ATCC 51907 / DSM 11121 / KW20 / Rd).